Here is an 885-residue protein sequence, read N- to C-terminus: DNA mismatch repair protein MutS (885 aa).

ATP is bound at residue 626–633 (GPNMGGKS).

This sequence belongs to the DNA mismatch repair MutS family.

Functionally, this protein is involved in the repair of mismatches in DNA. It is possible that it carries out the mismatch recognition step. This protein has a weak ATPase activity. This is DNA mismatch repair protein MutS from Burkholderia ambifaria (strain MC40-6).